A 778-amino-acid chain; its full sequence is Serine/threonine-protein kinase BRSK1 (778 aa).

A compositionally biased stretch (gly residues) spans 1–12; sequence MSSGAKEGGGGS. The tract at residues 1–29 is disordered; the sequence is MSSGAKEGGGGSPAYHLPHPHPHPPQHAQ. Positions 34 to 285 constitute a Protein kinase domain; it reads YRLEKTLGKG…LEQIQKHPWY (252 aa). Residues 40 to 48 and Lys-63 contribute to the ATP site; that span reads LGKGQTGLV. The active-site Proton acceptor is Asp-156. The residue at position 189 (Thr-189) is a Phosphothreonine; by LKB1. A UBA domain is found at 314 to 356; sequence ELDPDVLESMASLGCFRDRERLHRELRSEEENQEKMIYYLLLD. Residues 362–383 are compositionally biased toward basic and acidic residues; that stretch reads PSCEDQDLPPRNDVDPPRKRVD. The interval 362–548 is disordered; the sequence is PSCEDQDLPP…SPGGGVGGAA (187 aa). Phosphoserine is present on residues Ser-399, Ser-443, Ser-447, and Ser-450. Positions 430 to 457 are enriched in low complexity; that stretch reads SRSVSGASTGLSSSPLSSPRSPVFSFSP. An omega-N-methylarginine mark is found at Arg-466, Arg-481, Arg-484, and Arg-498. Over residues 491–508 the composition is skewed to pro residues; that stretch reads QPPPPSARSTPLPGPPGS. Position 508 is a phosphoserine (Ser-508). The segment covering 509 to 533 has biased composition (low complexity); the sequence is PRSSGGTPLHSPLHTPRASPTGTPG. Arg-525 is modified (omega-N-methylarginine). Residues Thr-529 and Thr-535 each carry the phosphothreonine modification. At Arg-550 the chain carries Omega-N-methylarginine. Thr-583 is modified (phosphothreonine). Phosphoserine is present on residues Ser-586, Ser-587, and Ser-601. The segment at 719–778 is disordered; it reads QPSVQALADEKNGAQTRPAGAPPRSLQPPPGRPDPELSSSPRRGPPKDKKLLATNGTPLP.

Belongs to the protein kinase superfamily. CAMK Ser/Thr protein kinase family. SNF1 subfamily. The cofactor is Mg(2+). In terms of processing, phosphorylated at Thr-189 by STK11/LKB1 in complex with STE20-related adapter-alpha (STRADA) pseudo kinase and CAB39. Not phosphorylated at Thr-189 by CaMKK2. In contrast, it is phosphorylated and activated by CaMKK1. May be inactivated via dephosphorylation of Thr-189 by PP2C. In terms of tissue distribution, widely expressed, with highest levels in brain and testis. Protein levels remain constant throughout the cell cycle.

It localises to the cytoplasm. The protein resides in the nucleus. It is found in the cytoskeleton. The protein localises to the microtubule organizing center. Its subcellular location is the centrosome. It localises to the synapse. The protein resides in the presynaptic active zone. It is found in the cytoplasmic vesicle. The protein localises to the secretory vesicle. Its subcellular location is the synaptic vesicle. The enzyme catalyses L-seryl-[protein] + ATP = O-phospho-L-seryl-[protein] + ADP + H(+). It catalyses the reaction L-threonyl-[protein] + ATP = O-phospho-L-threonyl-[protein] + ADP + H(+). It carries out the reaction L-seryl-[tau protein] + ATP = O-phospho-L-seryl-[tau protein] + ADP + H(+). The catalysed reaction is L-threonyl-[tau protein] + ATP = O-phospho-L-threonyl-[tau protein] + ADP + H(+). Its activity is regulated as follows. Activated by phosphorylation on Thr-189 by STK11/LKB1. In terms of biological role, serine/threonine-protein kinase that plays a key role in polarization of neurons and centrosome duplication. Phosphorylates CDC25B, CDC25C, MAPT/TAU, RIMS1, TUBG1, TUBG2 and WEE1. Following phosphorylation and activation by STK11/LKB1, acts as a key regulator of polarization of cortical neurons, probably by mediating phosphorylation of microtubule-associated proteins such as MAPT/TAU at 'Thr-529' and 'Ser-579'. Also regulates neuron polarization by mediating phosphorylation of WEE1 at 'Ser-642' in postmitotic neurons, leading to down-regulate WEE1 activity in polarized neurons. In neurons, localizes to synaptic vesicles and plays a role in neurotransmitter release, possibly by phosphorylating RIMS1. Also acts as a positive regulator of centrosome duplication by mediating phosphorylation of gamma-tubulin (TUBG1 and TUBG2) at 'Ser-131', leading to translocation of gamma-tubulin and its associated proteins to the centrosome. Involved in the UV-induced DNA damage checkpoint response, probably by inhibiting CDK1 activity through phosphorylation and activation of WEE1, and inhibition of CDC25B and CDC25C. This Homo sapiens (Human) protein is Serine/threonine-protein kinase BRSK1 (BRSK1).